The sequence spans 523 residues: Beta-glucosidase 31 (523 aa).

The N-terminal stretch at 1–22 (MTPARVVFICCVVLLAAAAAAA) is a signal peptide. A beta-D-glucoside-binding positions include Gln49, His149, and 194-195 (NE). The active-site Proton donor is the Glu195. Cys214 and Cys223 form a disulfide bridge. Asn227 carries an N-linked (GlcNAc...) asparagine glycan. 2 residues coordinate a beta-D-glucoside: Tyr339 and Glu413. The active-site Nucleophile is the Glu413. An N-linked (GlcNAc...) asparagine glycan is attached at Asn450. A beta-D-glucoside contacts are provided by residues Trp460, 467–468 (EY), and Phe476.

This sequence belongs to the glycosyl hydrolase 1 family.

The enzyme catalyses Hydrolysis of terminal, non-reducing beta-D-glucosyl residues with release of beta-D-glucose.. The polypeptide is Beta-glucosidase 31 (BGLU31) (Oryza sativa subsp. japonica (Rice)).